The primary structure comprises 312 residues: Ribosomal protein L11 methyltransferase (312 aa).

S-adenosyl-L-methionine-binding residues include Thr162, Gly183, Asp205, and Asn248.

It belongs to the methyltransferase superfamily. PrmA family.

Its subcellular location is the cytoplasm. The enzyme catalyses L-lysyl-[protein] + 3 S-adenosyl-L-methionine = N(6),N(6),N(6)-trimethyl-L-lysyl-[protein] + 3 S-adenosyl-L-homocysteine + 3 H(+). Functionally, methylates ribosomal protein L11. In Geobacillus kaustophilus (strain HTA426), this protein is Ribosomal protein L11 methyltransferase.